The sequence spans 577 residues: 2-succinyl-5-enolpyruvyl-6-hydroxy-3-cyclohexene-1-carboxylate synthase (577 aa).

The protein belongs to the TPP enzyme family. MenD subfamily. In terms of assembly, homodimer. Requires Mg(2+) as cofactor. Mn(2+) serves as cofactor. Thiamine diphosphate is required as a cofactor.

It catalyses the reaction isochorismate + 2-oxoglutarate + H(+) = 5-enolpyruvoyl-6-hydroxy-2-succinyl-cyclohex-3-ene-1-carboxylate + CO2. It functions in the pathway quinol/quinone metabolism; 1,4-dihydroxy-2-naphthoate biosynthesis; 1,4-dihydroxy-2-naphthoate from chorismate: step 2/7. It participates in quinol/quinone metabolism; menaquinone biosynthesis. Catalyzes the thiamine diphosphate-dependent decarboxylation of 2-oxoglutarate and the subsequent addition of the resulting succinic semialdehyde-thiamine pyrophosphate anion to isochorismate to yield 2-succinyl-5-enolpyruvyl-6-hydroxy-3-cyclohexene-1-carboxylate (SEPHCHC). This chain is 2-succinyl-5-enolpyruvyl-6-hydroxy-3-cyclohexene-1-carboxylate synthase, found in Enterococcus faecalis (strain ATCC 700802 / V583).